Reading from the N-terminus, the 656-residue chain is Pentatricopeptide repeat-containing protein At1g62260, mitochondrial (656 aa).

PPR repeat units follow at residues 70-104 (NTVT…DVVT), 105-134 (WNTM…MPSR), 135-169 (DSFS…NAVS), 170-200 (WSAM…DSSP), 203-227 (ALVA…YGSL), 234-264 (LVYA…IPDL), 280-310 (NVVS…MKDR), 311-345 (DTIS…DAHS), 346-372 (WNMM…TPEK), 373-407 (HTVS…GEKP), 408-438 (DPHT…VVKT), 442-472 (DVPV…MKLK), 474-508 (EVIT…GIYP), 509-544 (SHIT…KIEP), and 545-575 (QMEH…MPFE). The type E motif stretch occupies residues 580 to 655 (VWGALLDACR…ERGSSWVDSS (76 aa)).

Belongs to the PPR family. PCMP-E subfamily.

The protein resides in the mitochondrion. The polypeptide is Pentatricopeptide repeat-containing protein At1g62260, mitochondrial (PCMP-E10) (Arabidopsis thaliana (Mouse-ear cress)).